A 500-amino-acid chain; its full sequence is Versicolorin B desaturase (500 aa).

The helical transmembrane segment at 3–23 threads the bilayer; sequence FLSLPSLVIVIPVGYLLFHLG. Asn243 and Asn400 each carry an N-linked (GlcNAc...) asparagine glycan. Cys438 provides a ligand contact to heme.

It belongs to the cytochrome P450 family. Heme is required as a cofactor.

It is found in the membrane. The catalysed reaction is versicolorin B + NADPH + O2 + H(+) = versicolorin A + NADP(+) + 2 H2O. The protein operates within mycotoxin biosynthesis; aflatoxin biosynthesis. Functionally, versicolorin B desaturase; part of the gene cluster that mediates the biosynthesis of aflatoxins, a group of polyketide-derived furanocoumarins, and part of the most toxic and carcinogenic compounds among the known mycotoxins. The four major aflatoxins produced by A.parasiticus are aflatoxin B1 (AFB1), aflatoxin B2 (AFB2), aflatoxin G1 (AFG1) and aflatoxin G2 (AFG2). Within the aflatoxin pathway, the versicolorin B desaturase aflL catalyzes the conversion of versicolorin B (VERB) to versicolorin A (VERA). The biosynthesis of aflatoxins begins with the norsolorinic acid synthase aflC that combines a hexanoyl starter unit produced by the fatty acid synthase aflA/aflB and 7 malonyl-CoA extender units to synthesize the precursor NOR. The second step is the conversion of NOR to averantin and requires the norsolorinic acid ketoreductase aflD, which catalyzes the dehydration of norsolorinic acid to form (1'S)-averantin. The norsolorinic acid reductases aflE and aflF may also play a role in the conversion of NOR to AVN. The cytochrome P450 monooxygenase aflG then catalyzes the hydroxylation of AVN to 5'hydroxyaverantin (HAVN). The next step is performed by the 5'-hydroxyaverantin dehydrogenase aflH that transforms HAVN to 5'-oxoaverantin (OAVN) which is further converted to averufin (AVF) by aflK that plays a dual role in the pathway, as a 5'-oxoaverantin cyclase that mediates conversion of 5'-oxoaverantin, as well as a versicolorin B synthase in a later step in the pathway. The averufin oxidase aflI catalyzes the conversion of AVF to versiconal hemiacetal acetate (VHA). VHA is then the substrate for the versiconal hemiacetal acetate esterase aflJ to yield versiconal (VAL). Versicolorin B synthase aflK then converts VAL to versicolorin B (VERB) by closing the bisfuran ring of aflatoxin which is required for DNA-binding, thus giving to aflatoxin its activity as a mutagen. Then, the activity of the versicolorin B desaturase aflL leads to versicolorin A (VERA). A branch point starts from VERB since it can also be converted to dihydrodemethylsterigmatocystin (DMDHST), probably also by aflL, VERA being a precursor for aflatoxins B1 and G1, and DMDHST for aflatoxins B2 and G2. Next, the versicolorin reductase aflM and the cytochrome P450 monooxygenase aflN are involved in conversion of VERA to demethylsterigmatocystin (DMST). AflX and aflY seem also involved in this step, through probable aflX-mediated epoxide ring-opening step following versicolorin A oxidation and aflY-mediated Baeyer-Villiger oxidation required for the formation of the xanthone ring. The methyltransferase aflO then leads to the modification of DMST to sterigmatocystin (ST), and of DMDHST to dihydrosterigmatocystin (DHST). Both ST and DHST are then substrates of the O-methyltransferase aflP to yield O-methylsterigmatocystin (OMST) and dihydro-O-methylsterigmatocystin (DHOMST), respectively. Finally OMST is converted to aflatoxins B1 and G1, and DHOMST to aflatoxins B2 and G2, via the action of several enzymes including O-methylsterigmatocystin oxidoreductase aflQ, the cytochrome P450 monooxygenase aflU, but also the NADH-dependent flavin oxidoreductase nadA which is specifically required for the synthesis of AFG1. The protein is Versicolorin B desaturase of Aspergillus parasiticus (strain ATCC 56775 / NRRL 5862 / SRRC 143 / SU-1).